Here is a 226-residue protein sequence, read N- to C-terminus: ATP-dependent dethiobiotin synthetase BioD (226 aa).

Position 14–19 (14–19 (GIGKTF)) interacts with ATP. A Mg(2+)-binding site is contributed by Thr18. Lys39 is an active-site residue. Ser43 contributes to the substrate binding site. ATP contacts are provided by residues Asp56, 117–120 (EGVG), 177–178 (NT), 206–208 (PHI), and Asn213. Asp56 and Glu117 together coordinate Mg(2+).

This sequence belongs to the dethiobiotin synthetase family. As to quaternary structure, homodimer. The cofactor is Mg(2+).

The protein localises to the cytoplasm. It catalyses the reaction (7R,8S)-7,8-diammoniononanoate + CO2 + ATP = (4R,5S)-dethiobiotin + ADP + phosphate + 3 H(+). It participates in cofactor biosynthesis; biotin biosynthesis; biotin from 7,8-diaminononanoate: step 1/2. Its function is as follows. Catalyzes a mechanistically unusual reaction, the ATP-dependent insertion of CO2 between the N7 and N8 nitrogen atoms of 7,8-diaminopelargonic acid (DAPA, also called 7,8-diammoniononanoate) to form a ureido ring. In Xylella fastidiosa (strain Temecula1 / ATCC 700964), this protein is ATP-dependent dethiobiotin synthetase BioD.